The primary structure comprises 208 residues: Heavy metal-associated isoprenylated plant protein 42 (208 aa).

In terms of domain architecture, HMA spans 6-70 (FPICILKMNL…AVAKLGQSPQ (65 aa)). The segment at 93–116 (ATNKTQDKPSPPAPPVTATTPVET) is disordered. Cys-205 carries the post-translational modification Cysteine methyl ester. Residue Cys-205 is the site of S-farnesyl cysteine attachment. Residues 206-208 (SIM) constitute a propeptide, removed in mature form.

Belongs to the HIPP family.

Probable heavy-metal-binding protein. The protein is Heavy metal-associated isoprenylated plant protein 42 of Arabidopsis thaliana (Mouse-ear cress).